We begin with the raw amino-acid sequence, 337 residues long: PHD finger protein 11 (337 aa).

The C2HC pre-PHD-type zinc-finger motif lies at K42–L78. The PHD-type zinc finger occupies L108 to A160.

As to quaternary structure, interacts with BRCA1 and RELA.

Its subcellular location is the nucleus. In terms of biological role, positive regulator of Th1-type cytokine gene expression. This Bos taurus (Bovine) protein is PHD finger protein 11 (PHF11).